Reading from the N-terminus, the 98-residue chain is MSAYKYYDLIRKPIITEKTTTLSEQNKYAFYVDKFAEKLTLKKAIEEIFKVKVKKVNILNVKGKKKRFKGIIGTQINRKKAIVTLEKDHNIDFAGGIK.

Belongs to the universal ribosomal protein uL23 family. Part of the 50S ribosomal subunit. Contacts protein L29, and trigger factor when it is bound to the ribosome.

One of the early assembly proteins it binds 23S rRNA. One of the proteins that surrounds the polypeptide exit tunnel on the outside of the ribosome. Forms the main docking site for trigger factor binding to the ribosome. The sequence is that of Large ribosomal subunit protein uL23 from Rickettsia rickettsii (strain Iowa).